A 224-amino-acid chain; its full sequence is UPF0173 metal-dependent hydrolase EF_1371 (224 aa).

It belongs to the UPF0173 family.

The protein is UPF0173 metal-dependent hydrolase EF_1371 of Enterococcus faecalis (strain ATCC 700802 / V583).